Consider the following 292-residue polypeptide: Claudin-23 (292 aa).

The Cytoplasmic segment spans residues 1-3 (MRT). A helical transmembrane segment spans residues 4–24 (PVVMTLGMVLAPCGLLLNLTG). At 25-81 (TLAPGWRLVKGFLNQPVDVELYQGLWDMCREQSSRERECGQTDQWGYFEAQPVLVAR) the chain is on the extracellular side. Residues 82-102 (ALMVTSLAATVLGLLLASLGV) form a helical membrane-spanning segment. Over 103–110 (RCWQDEPN) the chain is Cytoplasmic. A helical transmembrane segment spans residues 111-131 (FVLAGLSGVVLFVAGLLGLIP). Residues 132 to 160 (VSWYNHFLGDRDVLPAPASPVTVQVSYSL) are Extracellular-facing. The chain crosses the membrane as a helical span at residues 161-181 (VLGYLGSCLLLLGGFSLALSF). Residues 182 to 292 (APWCDERCRR…DSSLPCDSDL (111 aa)) are Cytoplasmic-facing. The interval 222–292 (KYYSDGQHRP…DSSLPCDSDL (71 aa)) is disordered. A compositionally biased stretch (polar residues) spans 273-282 (DAPSCSTHPC).

It belongs to the claudin family. In terms of tissue distribution, expressed in germinal center B-cells, placenta, stomach as well as in colon tumor.

It is found in the cell junction. It localises to the tight junction. Its subcellular location is the cell membrane. Plays a major role in tight junction-specific obliteration of the intercellular space, through calcium-independent cell-adhesion activity. In Homo sapiens (Human), this protein is Claudin-23 (CLDN23).